Here is a 286-residue protein sequence, read N- to C-terminus: Bifunctional protein FolD (286 aa).

NADP(+) contacts are provided by residues 165-167 (GRS), serine 190, and valine 231.

The protein belongs to the tetrahydrofolate dehydrogenase/cyclohydrolase family. As to quaternary structure, homodimer.

It catalyses the reaction (6R)-5,10-methylene-5,6,7,8-tetrahydrofolate + NADP(+) = (6R)-5,10-methenyltetrahydrofolate + NADPH. The enzyme catalyses (6R)-5,10-methenyltetrahydrofolate + H2O = (6R)-10-formyltetrahydrofolate + H(+). It functions in the pathway one-carbon metabolism; tetrahydrofolate interconversion. Functionally, catalyzes the oxidation of 5,10-methylenetetrahydrofolate to 5,10-methenyltetrahydrofolate and then the hydrolysis of 5,10-methenyltetrahydrofolate to 10-formyltetrahydrofolate. The chain is Bifunctional protein FolD from Bacillus cereus (strain ZK / E33L).